The chain runs to 278 residues: Large ribosomal subunit protein uL2 (278 aa).

Residues 224–278 are disordered; it reads VAMNPVDHPHGGGEGRTSGGRNPVTPWGVPTKGKKTRSNKRTDTFILSSRHNRKK.

Belongs to the universal ribosomal protein uL2 family. In terms of assembly, part of the 50S ribosomal subunit. Forms a bridge to the 30S subunit in the 70S ribosome.

Functionally, one of the primary rRNA binding proteins. Required for association of the 30S and 50S subunits to form the 70S ribosome, for tRNA binding and peptide bond formation. It has been suggested to have peptidyltransferase activity; this is somewhat controversial. Makes several contacts with the 16S rRNA in the 70S ribosome. This is Large ribosomal subunit protein uL2 from Methylorubrum extorquens (strain CM4 / NCIMB 13688) (Methylobacterium extorquens).